The chain runs to 158 residues: SsrA-binding protein (158 aa).

This sequence belongs to the SmpB family.

Its subcellular location is the cytoplasm. Its function is as follows. Required for rescue of stalled ribosomes mediated by trans-translation. Binds to transfer-messenger RNA (tmRNA), required for stable association of tmRNA with ribosomes. tmRNA and SmpB together mimic tRNA shape, replacing the anticodon stem-loop with SmpB. tmRNA is encoded by the ssrA gene; the 2 termini fold to resemble tRNA(Ala) and it encodes a 'tag peptide', a short internal open reading frame. During trans-translation Ala-aminoacylated tmRNA acts like a tRNA, entering the A-site of stalled ribosomes, displacing the stalled mRNA. The ribosome then switches to translate the ORF on the tmRNA; the nascent peptide is terminated with the 'tag peptide' encoded by the tmRNA and targeted for degradation. The ribosome is freed to recommence translation, which seems to be the essential function of trans-translation. The protein is SsrA-binding protein of Roseiflexus castenholzii (strain DSM 13941 / HLO8).